We begin with the raw amino-acid sequence, 166 residues long: Putative esterase sll0410 (166 aa).

The active site involves Asp45.

Belongs to the 4-hydroxybenzoyl-CoA thioesterase family.

The sequence is that of Putative esterase sll0410 from Synechocystis sp. (strain ATCC 27184 / PCC 6803 / Kazusa).